The chain runs to 321 residues: Aspartate carbamoyltransferase catalytic subunit (321 aa).

Carbamoyl phosphate is bound by residues Arg57 and Thr58. Lys85 is a binding site for L-aspartate. Residues Arg107, His142, and Gln145 each contribute to the carbamoyl phosphate site. Residues Arg175 and Arg229 each contribute to the L-aspartate site. Carbamoyl phosphate-binding residues include Gly270 and Pro271.

It belongs to the aspartate/ornithine carbamoyltransferase superfamily. ATCase family. Heterododecamer (2C3:3R2) of six catalytic PyrB chains organized as two trimers (C3), and six regulatory PyrI chains organized as three dimers (R2).

It catalyses the reaction carbamoyl phosphate + L-aspartate = N-carbamoyl-L-aspartate + phosphate + H(+). The protein operates within pyrimidine metabolism; UMP biosynthesis via de novo pathway; (S)-dihydroorotate from bicarbonate: step 2/3. Its function is as follows. Catalyzes the condensation of carbamoyl phosphate and aspartate to form carbamoyl aspartate and inorganic phosphate, the committed step in the de novo pyrimidine nucleotide biosynthesis pathway. This Mycobacterium leprae (strain TN) protein is Aspartate carbamoyltransferase catalytic subunit.